A 465-amino-acid polypeptide reads, in one-letter code: Juvenile hormone epoxide hydrolase 2 (465 aa).

A helical transmembrane segment spans residues 7–27 (ILWIAIVIGLGVLYYEITKEF). Residue aspartate 224 is the Nucleophile of the active site. Tyrosine 370 serves as the catalytic Proton donor. The Proton acceptor role is filled by histidine 427.

The protein belongs to the peptidase S33 family.

It localises to the microsome membrane. The protein localises to the endoplasmic reticulum membrane. It catalyses the reaction cis-stilbene oxide + H2O = (1R,2R)-hydrobenzoin. The enzyme catalyses 1-(4-methoxyphenyl)-N-methyl-N-[(3-methyloxetan-3-yl)methyl]methanamine + H2O = 2-{[(4-methoxybenzyl)(methyl)amino]methyl}-2-methylpropane-1,3-diol. In terms of biological role, catalyzes juvenile hormone hydrolysis. In Ctenocephalides felis (Cat flea), this protein is Juvenile hormone epoxide hydrolase 2.